The sequence spans 787 residues: Exocyst complex component SEC15B (787 aa).

The protein belongs to the SEC15 family. In terms of assembly, the exocyst complex is composed of SEC3, SEC5, SEC6, SEC8, SEC10, EXO70A1 and EXO84B. Interacts with EXO84B. Binds to EXO70H1 AND EXO70B2. Binds directly to B1L.

It localises to the cytoplasm. The protein localises to the cytosol. The protein resides in the cytoskeleton. It is found in the phragmoplast. Its subcellular location is the secreted. It localises to the cell wall. The protein localises to the extracellular exosome. In terms of biological role, component of the exocyst complex involved in the docking of exocytic vesicles with fusion sites on the plasma membrane during regulated or polarized secretion. Involved in polarized cell growth and organ morphogenesis. During cytokinesis, involved in cell plate initiation, cell plate maturation and formation of new primary cell wall. The sequence is that of Exocyst complex component SEC15B from Arabidopsis thaliana (Mouse-ear cress).